We begin with the raw amino-acid sequence, 1505 residues long: Probable serine/threonine-protein kinase DDB_G0280133 (1505 aa).

3 PAS domains span residues 2-72, 108-178, and 215-284; these read NTHN…FETG, RMFI…YHGG, and DMFK…TDSH. Disordered regions lie at residues 282-348 and 398-533; these read DSHD…FNHS and RVYG…ESSY. Low complexity-rich tracts occupy residues 289–314 and 328–344; these read QQQQQTTTTTTTTTTTTSTTSTTTST and SSPPIDSPLTTPSTPTT. Composition is skewed to basic and acidic residues over residues 398-407 and 415-430; these read RVYGKDKDKN and ENKDGKQLDTIKESKE. Residues 431 to 443 are compositionally biased toward basic residues; sequence HRHSKEKKKRKKD. Residues 448–468 show a composition bias toward low complexity; sequence NNNNNNNNNNNNNNEQTSDSS. The segment covering 479-489 has biased composition (basic residues); that stretch reads SKKKRSSKKKS. Residues 515–532 show a composition bias toward low complexity; the sequence is SSNSSSNSSHSNAPHESS. A Protein kinase domain is found at 542-805; the sequence is YTLGKTLGRG…IMNVLNHPWL (264 aa). ATP is bound by residues 548 to 556 and K571; that span reads LGRGNYGVV. The Proton acceptor role is filled by D684. Residues 855 to 960 show a composition bias toward low complexity; the sequence is NILNNNNNNN…NNTNSIINNN (106 aa). Disordered regions lie at residues 855-1048, 1072-1091, and 1181-1358; these read NILN…SHQQ, QPNQQVSFDTNQSYQQQLQQ, and QQQQ…DEEN. A coiled-coil region spans residues 903–939; it reads NNNNNINNNINNNNNVNNNVNNNKNNNNNNNNNSNNN. Polar residues predominate over residues 961 to 974; the sequence is LYNQSLSPQNNNIY. Composition is skewed to low complexity over residues 975–1013 and 1022–1048; these read QHSPQHQQHQHQQQHSPQQQQHQQHQHHQQQQQQLQQQH and QQHQQQHQQQHQQQHQQHQQHQQSHQQ. Positions 1072–1082 are enriched in polar residues; sequence QPNQQVSFDTN. Residues 1125–1189 are a coiled coil; the sequence is IQQIQQLQQQ…QQQQQQQQND (65 aa). The span at 1202-1271 shows a compositional bias: basic and acidic residues; that stretch reads SKRDNSYNKR…NSRDNNRYNN (70 aa). A compositionally biased stretch (low complexity) spans 1272–1282; the sequence is RDNNNNNNSNN. 2 stretches are compositionally biased toward basic and acidic residues: residues 1283-1301 and 1313-1326; these read NRERDRYKKNKNENFDYGK and NKDKPNIVREKPDF. Over residues 1331 to 1347 the composition is skewed to polar residues; that stretch reads SLKNDSSSNYGTISSGR. Residues 1399–1463 form the FHA domain; the sequence is FLFGRNRDIA…NGTFLKGEKI (65 aa).

Belongs to the protein kinase superfamily. CAMK Ser/Thr protein kinase family. SNF1 subfamily.

It catalyses the reaction L-seryl-[protein] + ATP = O-phospho-L-seryl-[protein] + ADP + H(+). The enzyme catalyses L-threonyl-[protein] + ATP = O-phospho-L-threonyl-[protein] + ADP + H(+). This Dictyostelium discoideum (Social amoeba) protein is Probable serine/threonine-protein kinase DDB_G0280133.